We begin with the raw amino-acid sequence, 223 residues long: Arginine kinase (223 aa).

One can recognise a Phosphagen kinase C-terminal domain in the interval 56-222 (FVISTRVRLI…LELIKIEKEM (167 aa)). Residues 59-63 (STRVR) and histidine 68 contribute to the ATP site. Cysteine 141 provides a ligand contact to L-arginine. ATP contacts are provided by residues 150–154 (RASVH) and 175–180 (RGTRGE). Glutamate 180 is a binding site for L-arginine.

The protein belongs to the ATP:guanido phosphotransferase family.

It catalyses the reaction L-arginine + ATP = N(omega)-phospho-L-arginine + ADP + H(+). This is Arginine kinase from Chionoecetes opilio (Atlantic snow crab).